The chain runs to 171 residues: Bursicon (171 aa).

Positions 1-31 (MISSPSTPATFAAGSLVLLCLVLGGGHFALA) are cleaved as a signal peptide. Intrachain disulfides connect C47–C96, C61–C110, C71–C131, C75–C133, and C93–C136. Positions 47 to 137 (CQVTPVIHVL…PLECMCRPCT (91 aa)) constitute a CTCK domain.

In terms of assembly, heterodimer of burs and pburs.

It is found in the secreted. In terms of biological role, final heterodimeric neurohormone released at the end of the molting cycle, involved in the sclerotization (tanning) of the insect cuticle, melanization and wing spreading. In Culex pipiens pipiens (Northern house mosquito), this protein is Bursicon.